The sequence spans 279 residues: HTH-type transcriptional regulator BhcR (279 aa).

The span at 1 to 13 shows a compositional bias: basic residues; it reads MSVQIRKRGRPRG. The interval 1–21 is disordered; that stretch reads MSVQIRKRGRPRGRAGGLGAE. The region spanning 26–87 is the HTH iclR-type domain; the sequence is IRALDRALDI…SQTQAWHVGP (62 aa). Residues 47 to 66 constitute a DNA-binding region (H-T-H motif); that stretch reads LTEIAQRLDMAPSTVHRVLV. One can recognise an IclR-ED domain in the interval 102 to 271; the sequence is LVERARPLLR…ARELSFGMAP (170 aa).

Functionally, transcriptional regulator of the bhc gene cluster involved in glycolate and glyoxylate assimilation via the beta-hydroxyaspartate cycle (BHAC). Glyoxylate negatively affects the interaction of BhcR with the promoter region of the bhc gene cluster. This Paracoccus denitrificans (strain Pd 1222) protein is HTH-type transcriptional regulator BhcR.